Here is a 101-residue protein sequence, read N- to C-terminus: DNA-binding protein Fis (101 aa).

The H-T-H motif DNA-binding region spans 77-96; the sequence is QTRAANMLGINRGTLRKKLK.

It belongs to the transcriptional regulatory Fis family. As to quaternary structure, homodimer.

In terms of biological role, activates ribosomal RNA transcription. Plays a direct role in upstream activation of rRNA promoters. The protein is DNA-binding protein Fis of Shewanella denitrificans (strain OS217 / ATCC BAA-1090 / DSM 15013).